Reading from the N-terminus, the 490-residue chain is Glycogen synthase kinase-3 alpha (490 aa).

Gly residues predominate over residues 1–15 (MSGGGPSGGGPGGSG). A disordered region spans residues 1 to 97 (MSGGGPSGGG…PPGVKLGRDS (97 aa)). At Ser-2 the chain carries N-acetylserine. Residue Ser-2 is modified to Phosphoserine. At Ser-21 the chain carries Phosphoserine; by PKB/AKT1. The segment covering 25–82 (PGGGGGGGGGGPGGSASGPGGTGGGKASVGAMGGGVGASSSGGGPSGSGGGGSGGPGA) has biased composition (gly residues). Phosphoserine occurs at positions 72, 77, and 97. A Protein kinase domain is found at 119-404 (YTDIKVIGNG…PLEACAHSFF (286 aa)). Residues 125 to 133 (IGNGSFGVV) and Lys-148 contribute to the ATP site. Asp-244 acts as the Proton acceptor in catalysis. Tyr-279 is subject to Phosphotyrosine. The segment at 451–490 (GPASPLTTSYNPSSQALTEAQTGQDWQPSDATTATLASSS) is disordered. A compositionally biased stretch (polar residues) spans 455-480 (PLTTSYNPSSQALTEAQTGQDWQPSD). The span at 481-490 (ATTATLASSS) shows a compositional bias: low complexity.

This sequence belongs to the protein kinase superfamily. CMGC Ser/Thr protein kinase family. GSK-3 subfamily. Monomer. Interacts with AXIN1 and CTNNB1/beta-catenin. Interacts with ARRB2. Interacts with CTNND2. Interacts with LMBR1L. Interacts with DDX3X. Interacts with TNFRSF10B. Phosphorylated by AKT1 at Ser-21: upon insulin-mediated signaling, the activated PKB/AKT1 protein kinase phosphorylates and deactivates GSK3A, resulting in the dephosphorylation and activation of GYS1. Activated by phosphorylation at Tyr-279.

It catalyses the reaction L-seryl-[tau protein] + ATP = O-phospho-L-seryl-[tau protein] + ADP + H(+). The enzyme catalyses L-threonyl-[tau protein] + ATP = O-phospho-L-threonyl-[tau protein] + ADP + H(+). It carries out the reaction L-seryl-[protein] + ATP = O-phospho-L-seryl-[protein] + ADP + H(+). The catalysed reaction is L-threonyl-[protein] + ATP = O-phospho-L-threonyl-[protein] + ADP + H(+). Activated by phosphorylation at Tyr-279. In response to insulin, inhibited by phosphorylation at Ser-21 by PKB/AKT1; phosphorylation at this site causes a conformational change, preventing access of substrates to the active site. Inhibited by lithium. Functionally, constitutively active protein kinase that acts as a negative regulator in the hormonal control of glucose homeostasis, Wnt signaling and regulation of transcription factors and microtubules, by phosphorylating and inactivating glycogen synthase (GYS1 or GYS2), CTNNB1/beta-catenin, APC and AXIN1. Requires primed phosphorylation of the majority of its substrates. Contributes to insulin regulation of glycogen synthesis by phosphorylating and inhibiting GYS1 activity and hence glycogen synthesis. Regulates glycogen metabolism in liver, but not in muscle. May also mediate the development of insulin resistance by regulating activation of transcription factors. In Wnt signaling, regulates the level and transcriptional activity of nuclear CTNNB1/beta-catenin. Facilitates amyloid precursor protein (APP) processing and the generation of APP-derived amyloid plaques found in Alzheimer disease. May be involved in the regulation of replication in pancreatic beta-cells. Is necessary for the establishment of neuronal polarity and axon outgrowth. Through phosphorylation of the anti-apoptotic protein MCL1, may control cell apoptosis in response to growth factors deprivation. Acts as a regulator of autophagy by mediating phosphorylation of KAT5/TIP60 under starvation conditions, activating KAT5/TIP60 acetyltransferase activity and promoting acetylation of key autophagy regulators, such as ULK1 and RUBCNL/Pacer. Negatively regulates extrinsic apoptotic signaling pathway via death domain receptors. Promotes the formation of an anti-apoptotic complex, made of DDX3X, BRIC2 and GSK3B, at death receptors, including TNFRSF10B. The anti-apoptotic function is most effective with weak apoptotic signals and can be overcome by stronger stimulation. The protein is Glycogen synthase kinase-3 alpha (Gsk3a) of Mus musculus (Mouse).